The primary structure comprises 208 residues: Ribosomal RNA small subunit methyltransferase G (208 aa).

S-adenosyl-L-methionine-binding positions include glycine 76, leucine 81, 127-128 (VE), and arginine 142.

The protein belongs to the methyltransferase superfamily. RNA methyltransferase RsmG family.

Its subcellular location is the cytoplasm. It carries out the reaction guanosine(527) in 16S rRNA + S-adenosyl-L-methionine = N(7)-methylguanosine(527) in 16S rRNA + S-adenosyl-L-homocysteine. Specifically methylates the N7 position of guanine in position 527 of 16S rRNA. This Legionella pneumophila (strain Lens) protein is Ribosomal RNA small subunit methyltransferase G.